We begin with the raw amino-acid sequence, 319 residues long: RNA exonuclease 4 (319 aa).

The tract at residues 1 to 75 is disordered; it reads MAALSSNWKK…GGVHSSKIEE (75 aa). Positions 132–293 constitute an Exonuclease domain; it reads KYIAIDCEMV…FRKHKSAFDV (162 aa). The disordered stretch occupies residues 295 to 319; it reads HANRYAPKTASGGGQKGNKPKKKKK.

Belongs to the REXO4 family.

The protein resides in the nucleus. Functionally, exoribonuclease involved in ribosome biosynthesis. Involved in the processing of ITS1, the internal transcribed spacer localized between the 18S and 5.8S rRNAs. This chain is RNA exonuclease 4 (REX4), found in Gibberella zeae (strain ATCC MYA-4620 / CBS 123657 / FGSC 9075 / NRRL 31084 / PH-1) (Wheat head blight fungus).